Reading from the N-terminus, the 99-residue chain is MSSQEKLLKTVIRPHVSDKTYGLSDANSTIVFEVARFANKQDVKNAVEKLFEVKVESVNILNVKGKARRFGRVEGGTKAWKKAYVKLAEGHDINFVGAE.

The protein belongs to the universal ribosomal protein uL23 family. As to quaternary structure, part of the 50S ribosomal subunit. Contacts protein L29, and trigger factor when it is bound to the ribosome.

Functionally, one of the early assembly proteins it binds 23S rRNA. One of the proteins that surrounds the polypeptide exit tunnel on the outside of the ribosome. Forms the main docking site for trigger factor binding to the ribosome. The polypeptide is Large ribosomal subunit protein uL23 (Francisella tularensis subsp. tularensis (strain SCHU S4 / Schu 4)).